Reading from the N-terminus, the 108-residue chain is Large ribosomal subunit protein uL23 (108 aa).

The protein belongs to the universal ribosomal protein uL23 family. Part of the 50S ribosomal subunit. Contacts protein L29, and trigger factor when it is bound to the ribosome.

One of the early assembly proteins it binds 23S rRNA. One of the proteins that surrounds the polypeptide exit tunnel on the outside of the ribosome. Forms the main docking site for trigger factor binding to the ribosome. This chain is Large ribosomal subunit protein uL23, found in Polaromonas sp. (strain JS666 / ATCC BAA-500).